We begin with the raw amino-acid sequence, 502 residues long: Zinc finger C3HC-type protein 1 (502 aa).

Alanine 2 is modified (N-acetylalanine). A Phosphoserine modification is found at serine 24. Phosphothreonine is present on threonine 28. Positions 35–74 are disordered; that stretch reads LIDEGIAPEEGGVDAQDTSATSQSVNGSPQAEQPSLESTS. Polar residues predominate over residues 50–72; that stretch reads QDTSATSQSVNGSPQAEQPSLES. Phosphoserine is present on residues serine 58 and serine 62. A Phosphothreonine modification is found at threonine 84. The segment at 102–156 adopts a C3HC-type zinc-finger fold; sequence CAKYGWVTVECDMLKCSSCQAFLCASLQPAFDFDRYKQRCAELKKALCTAHEKFC. The segment at 302–423 is disordered; sequence SSPIPGLEGR…SSRSFFDPTS (122 aa). Phosphoserine occurs at positions 321 and 329. Threonine 333 carries the phosphothreonine modification. A phosphoserine mark is found at serine 338, serine 344, serine 354, serine 359, and serine 370. The segment covering 351-360 has biased composition (polar residues); sequence RTRSWDSSSP. The segment covering 371 to 380 has biased composition (low complexity); it reads PTTRTRPVTR. Serine 381 carries the post-translational modification Phosphoserine. Position 384 is a phosphothreonine (threonine 384). Serine 395 carries the post-translational modification Phosphoserine. A Nuclear localization signal motif is present at residues 396–402; the sequence is PLRKAKR. Phosphoserine occurs at positions 407 and 483. Positions 407 to 422 are enriched in low complexity; sequence SSSSSDTSSRSFFDPT.

As to quaternary structure, interacts with TPR; this interaction mediates ZC3HC1 nuclear envelopes (NE)-association but also required for proper positioning of a substantial amount of TPR at the nuclear basket (NB). Phosphorylated. May also be weakly phosphorylated on Tyr residues.

It is found in the nucleus. The protein resides in the nucleus envelope. Functionally, required for proper positioning of a substantial amount of TPR at the nuclear basket (NB) through interaction with TPR. This is Zinc finger C3HC-type protein 1 (ZC3HC1) from Pongo abelii (Sumatran orangutan).